A 333-amino-acid polypeptide reads, in one-letter code: Beta-ketoacyl-[acyl-carrier-protein] synthase III (333 aa).

Catalysis depends on residues C122 and H258. Residues 259-263 form an ACP-binding region; sequence QANER. The active site involves N289.

Belongs to the thiolase-like superfamily. FabH family. In terms of assembly, homodimer.

It localises to the cytoplasm. The enzyme catalyses butanoyl-CoA + malonyl-[ACP] + H(+) = 3-oxohexanoyl-[ACP] + CO2 + CoA. It catalyses the reaction malonyl-[ACP] + acetyl-CoA + H(+) = 3-oxobutanoyl-[ACP] + CO2 + CoA. The catalysed reaction is 2-methylpropanoyl-CoA + malonyl-[ACP] + H(+) = 4-methyl-3-oxopentanoyl-[ACP] + CO2 + CoA. Its pathway is lipid metabolism; fatty acid biosynthesis. Inhibited by thiolactomycin. In terms of biological role, catalyzes the condensation reaction of fatty acid synthesis by the addition to an acyl acceptor of two carbons from malonyl-ACP. Catalyzes the first condensation reaction which initiates fatty acid synthesis and may therefore play a role in governing the total rate of fatty acid production. Possesses both acetoacetyl-ACP synthase and acetyl transacylase activities. Utilizes both straight and branched-chain acyl-CoAs. The order of reactivity with the various acyl-CoA substrates at saturation is butanoyl-CoA &gt; acetyl-CoA &gt; 2-methylpropanoyl-CoA (or isobutyryl-CoA). Not involved in tetracenomycin C (TCM C) biosynthesis. This chain is Beta-ketoacyl-[acyl-carrier-protein] synthase III (fabH), found in Streptomyces glaucescens.